We begin with the raw amino-acid sequence, 350 residues long: Histidinol-phosphate aminotransferase (350 aa).

Residue Lys-207 is modified to N6-(pyridoxal phosphate)lysine.

It belongs to the class-II pyridoxal-phosphate-dependent aminotransferase family. Histidinol-phosphate aminotransferase subfamily. Homodimer. Requires pyridoxal 5'-phosphate as cofactor.

It catalyses the reaction L-histidinol phosphate + 2-oxoglutarate = 3-(imidazol-4-yl)-2-oxopropyl phosphate + L-glutamate. It functions in the pathway amino-acid biosynthesis; L-histidine biosynthesis; L-histidine from 5-phospho-alpha-D-ribose 1-diphosphate: step 7/9. The polypeptide is Histidinol-phosphate aminotransferase (Streptococcus thermophilus (strain ATCC BAA-491 / LMD-9)).